The primary structure comprises 503 residues: Probable voltage-gated potassium channel subunit kvs-4 (503 aa).

Residues Met1–Ala231 lie on the Cytoplasmic side of the membrane. The short motif at Trp217 to Ile219 is the Required for dendritic localization element. Residues Phe232–Leu252 form a helical membrane-spanning segment. The Extracellular segment spans residues Pro253–Pro275. N-linked (GlcNAc...) asparagine glycosylation is present at Asn264. The chain crosses the membrane as a helical span at residues Met276–Leu296. At Lys297–Asn313 the chain is on the cytoplasmic side. A helical transmembrane segment spans residues Ile314 to Ile334. At Ser335–Phe346 the chain is on the extracellular side. Residues Leu347–Tyr366 form a helical; Voltage-sensor membrane-spanning segment. Residues Ser367–Gln383 are Cytoplasmic-facing. Residues Ser368 to Gln383 form an S4-S5 linker region. The chain crosses the membrane as a helical span at residues Leu384–Phe404. The Extracellular portion of the chain corresponds to Leu405 to Ile417. The segment at residues Pro418 to Thr429 is an intramembrane region (helical). Residues Thr430–Gly434 lie within the membrane without spanning it. Positions Thr430 to Asp435 match the Selectivity filter motif. Residues Asp435–Leu445 are Extracellular-facing. Residues Val446–Val466 form a helical membrane-spanning segment. The Cytoplasmic portion of the chain corresponds to Asp467–Thr503. The Required for dendritic localization signature appears at Glu496–Leu500.

It belongs to the potassium channel family. B (Shab) (TC 1.A.1.2) subfamily. Kv2.2/KCNB2 sub-subfamily. In terms of assembly, homotetramer or heterotetramer. Interacts with unc-101 (via N-terminus); which targets kvs-4 to dendrites. As to expression, expressed in the cholinergic motor neuron DA9, mechanosensory neurons ALM and PLM, and the interneuron PVPL.

It localises to the cell membrane. The protein resides in the perikaryon. It is found in the cell projection. The protein localises to the axon. Its subcellular location is the dendrite. Its function is as follows. Voltage-gated potassium channel that mediates transmembrane potassium transport in excitable membranes. The protein is Probable voltage-gated potassium channel subunit kvs-4 of Caenorhabditis elegans.